We begin with the raw amino-acid sequence, 216 residues long: Phosphoribosylaminoimidazole-succinocarboxamide synthase (216 aa).

Belongs to the SAICAR synthetase family.

It carries out the reaction 5-amino-1-(5-phospho-D-ribosyl)imidazole-4-carboxylate + L-aspartate + ATP = (2S)-2-[5-amino-1-(5-phospho-beta-D-ribosyl)imidazole-4-carboxamido]succinate + ADP + phosphate + 2 H(+). It participates in purine metabolism; IMP biosynthesis via de novo pathway; 5-amino-1-(5-phospho-D-ribosyl)imidazole-4-carboxamide from 5-amino-1-(5-phospho-D-ribosyl)imidazole-4-carboxylate: step 1/2. The chain is Phosphoribosylaminoimidazole-succinocarboxamide synthase (purC) from Aquifex aeolicus (strain VF5).